Consider the following 693-residue polypeptide: Elongation factor G (693 aa).

Residues 6 to 286 (KYTRNIGIAA…AICRYLPSPI (281 aa)) enclose the tr-type G domain. Residues 15–22 (AHIDAGKT), 83–87 (DTPGH), and 137–140 (NKMD) each bind GTP.

This sequence belongs to the TRAFAC class translation factor GTPase superfamily. Classic translation factor GTPase family. EF-G/EF-2 subfamily.

It is found in the cytoplasm. Catalyzes the GTP-dependent ribosomal translocation step during translation elongation. During this step, the ribosome changes from the pre-translocational (PRE) to the post-translocational (POST) state as the newly formed A-site-bound peptidyl-tRNA and P-site-bound deacylated tRNA move to the P and E sites, respectively. Catalyzes the coordinated movement of the two tRNA molecules, the mRNA and conformational changes in the ribosome. The polypeptide is Elongation factor G (Karelsulcia muelleri (strain GWSS) (Sulcia muelleri)).